We begin with the raw amino-acid sequence, 575 residues long: Urease subunit alpha (575 aa).

The Urease domain maps to 137–575 (GGIDCHIHFI…LPMTQRYFLF (439 aa)). Residues histidine 142, histidine 144, and lysine 225 each contribute to the Ni(2+) site. Lysine 225 carries the N6-carboxylysine modification. Residue histidine 227 participates in substrate binding. Positions 254 and 280 each coordinate Ni(2+). The Proton donor role is filled by histidine 328. A Ni(2+)-binding site is contributed by aspartate 368.

This sequence belongs to the metallo-dependent hydrolases superfamily. Urease alpha subunit family. As to quaternary structure, heterotrimer of UreA (gamma), UreB (beta) and UreC (alpha) subunits. Three heterotrimers associate to form the active enzyme. It depends on Ni cation as a cofactor. Carboxylation allows a single lysine to coordinate two nickel ions.

The protein resides in the cytoplasm. It carries out the reaction urea + 2 H2O + H(+) = hydrogencarbonate + 2 NH4(+). It functions in the pathway nitrogen metabolism; urea degradation; CO(2) and NH(3) from urea (urease route): step 1/1. The sequence is that of Urease subunit alpha from Methylibium petroleiphilum (strain ATCC BAA-1232 / LMG 22953 / PM1).